A 933-amino-acid chain; its full sequence is Collagen alpha-2(I) chain (933 aa).

A compositionally biased stretch (gly residues) spans 1–16 (SGGFDFGVGLGPGPMG). Disordered stretches follow at residues 1 to 191 (SGGF…LTGA) and 206 to 933 (LPGP…AGVR). A compositionally biased stretch (low complexity) spans 17-53 (LMGPRGPPGASGAPGPQGFQGPAGEPGEPGQTGPAGA). 2 positions are modified to 4-hydroxyproline: proline 24 and proline 30. Positions 57–72 (KAGEDGHPGKPGRPGE) are enriched in basic and acidic residues. Lysine 94 bears the 5-hydroxylysine; alternate mark. O-linked (Gal...) hydroxylysine; alternate glycosylation is present at lysine 94. 3 stretches are compositionally biased toward low complexity: residues 108–137 (VGAPGPAGARGSDGSVGPVGPAGPIGSAGP), 162–176 (AGPRGEQGLPGVSGP), and 213–228 (PGPVGAVGATGARGLV). A compositionally biased stretch (gly residues) spans 280 to 289 (GLRGGPGSRG). 4-hydroxyproline occurs at positions 317 and 320. A compositionally biased stretch (gly residues) spans 413 to 422 (GVQGGKGEQG). Low complexity-rich tracts occupy residues 468–485 (PGESGAAGPVGPIGSRGP) and 497–507 (EPGVVGAPGTA). Over residues 508–517 (GPAGSGGLPG) the composition is skewed to gly residues. Low complexity-rich tracts occupy residues 540–584 (VGTT…PRGS), 591–611 (VGPAGPNGFAGPAGAAGQPGA), and 627–640 (PTGPVGAAGPSGPN). A compositionally biased stretch (gly residues) spans 644 to 656 (GPAGGRGDGGPPG). The span at 657-667 (LTGFPGAAGRT) shows a compositional bias: low complexity. Residues 704–713 (GETGAGGPPG) show a composition bias toward gly residues. Low complexity-rich tracts occupy residues 721-748 (SGEPGTAGPPGTAGPQGLLGAPGILGLP) and 756-781 (LPGVAGAVGEPGPLGISGPPGARGPS). The segment covering 795–807 (AGRDGLPGHKGER) has biased composition (basic and acidic residues). Low complexity-rich tracts occupy residues 809 to 831 (YAGNAGPVGAAGAPGPHGSVGPA) and 840 to 860 (PGPAGSVGPVGAVGPRGPSGP). The span at 864–874 (RGDKGEGDKGP) shows a compositional bias: basic and acidic residues.

It belongs to the fibrillar collagen family. Trimers of one alpha 2(I) and two alpha 1(I) chains. Interacts (via C-terminus) with TMEM131 (via PapD-L domain); the interaction is direct and is involved in assembly and TRAPPIII ER-to-Golgi transport complex-dependent secretion of collagen. Post-translationally, prolines at the third position of the tripeptide repeating unit (G-X-Y) are hydroxylated in some or all of the chains. Expressed in bones.

Its subcellular location is the secreted. It localises to the extracellular space. It is found in the extracellular matrix. In terms of biological role, type I collagen is a member of group I collagen (fibrillar forming collagen). This chain is Collagen alpha-2(I) chain, found in Glyptodon sp. (strain SLP-2019) (Giant armadillo).